The primary structure comprises 945 residues: Collagen-like protein 1 (945 aa).

2 disordered regions span residues 80 to 226 and 257 to 441; these read SLKG…SPDL and GEKG…DKGE. 2 Collagen-like domains span residues 83-142 and 146-205; these read GDPG…QGDK and GDVG…KGDK. Basic and acidic residues-rich tracts occupy residues 109-145 and 168-208; these read QGTKGEQGDQGEQGDKGDKGDKGDVGAKGDQGDKGDQ and DQGD…KGDK. A glycan (N-linked (GlcNAc...) asparagine; by host) is linked at N211. Collagen-like domains are found at residues 257-376, 383-442, 488-547, 554-613, and 635-694; these read GEKG…KGDK, GDKG…KGEN, GEKG…VGDK, GDKG…KGDV, and GDKG…VGAS. N-linked (GlcNAc...) asparagine; by host glycosylation occurs at N442. Residues 488 to 687 show a composition bias toward basic and acidic residues; sequence GEKGDKGDTG…DKGDKGDKGD (200 aa). The interval 488–712 is disordered; the sequence is GEKGDKGDTG…SPTTGENGDS (225 aa). Residues 703–712 show a composition bias toward polar residues; the sequence is SPTTGENGDS. An N-linked (GlcNAc...) asparagine; by host glycan is attached at N716. The interval 733–768 is disordered; sequence TNIKGDKGDKGDKGDKGDKGDTGDVGLKGDTGTPGS. A compositionally biased stretch (basic and acidic residues) spans 736–754; sequence KGDKGDKGDKGDKGDKGDT. The segment covering 756 to 765 has biased composition (low complexity); sequence DVGLKGDTGT.

Post-translationally, may be hydroxylated on lysine by the viral-encoded procollagen-lysine,2-oxoglutarate 5-dioxygenase.

The protein resides in the virion. In terms of biological role, may participate in the formation of a layer of cross-linked glycosylated fibrils at the viral surface thus giving it a hairy-like appearance. This Acanthamoeba polyphaga mimivirus (APMV) protein is Collagen-like protein 1.